The primary structure comprises 1460 residues: Actin cytoskeleton-regulatory complex protein PAN1 (1460 aa).

A compositionally biased stretch (low complexity) spans 1-56 (MYNPYQQQGMGYQQQQQQQQQQPNGFYPQQQQGQSSNQPQGQPQPQQQMAFNQPQA). The segment at 1-151 (MYNPYQQQGM…SIQPQGTGYY (151 aa)) is disordered. The segment covering 65-79 (SFGNSFSTMPQQPQT) has biased composition (polar residues). Low complexity-rich tracts occupy residues 80-110 (GYNNNGNNGSVYGNGNFGQQPQQQQQQVKPQ), 117-128 (NSSMPMMNTTGT), and 136-146 (QQPQLQSIQPQ). 5 consecutive repeat copies span residues 142-153 (SIQPQGTGYYQS), 164-175 (PLQSQGTGYYVS), 188-199 (PLQAQGTGYYQS), 215-226 (PLKPQQTGFYLQ), and 235-246 (PLKPTATGFVNS). The 15 X 12 AA tandem repeats of [SPNAG]-[IL]-[QKNGT]-[PSA]-[QT]-[GQAPISTLYK]-T-G-[YFGML]-[YVMGAQL]-[QVLNPAG]-[ASQPN] stretch occupies residues 142–568 (SIQPQGTGYY…TAQKTGFGNN (427 aa)). Residues 185–197 (TQQPLQAQGTGYY) are compositionally biased toward polar residues. A disordered region spans residues 185-214 (TQQPLQAQGTGYYQSQPQQVPPPQQAQSLQ). T241 carries the post-translational modification Phosphothreonine. 2 consecutive EF-hand domains span residues 269–304 (QDQAKFETLFRSIVTNGSNTVSGANCRKILMRSGLP) and 306–338 (SQLARIWTLCDTSKAGELLFPEFALAMHLINDV). The EH 1 domain occupies 270–359 (DQAKFETLFR…SKTKNEVSSF (90 aa)). 11 repeat units span residues 328-350 (FALAMHLINDVLQGDTIPYELDS), 392-403 (NLQPQPTGYMPQ), 409-420 (PLQSQITGGGVA), 422-433 (ALNPQSTGFMAP), 446-457 (GLNPQITGGAPA), 467-478 (ALQPQTTGMMPQ), 491-502 (NLGPQLTGGALQ), 503-511 (SQYTGGYGS), 531-541 (GLQSQLTGLQP), 542-549 (QPTGFLPP), and 557-568 (PLTAQKTGFGNN). The 2 X 23 AA repeats of F-A-L-[AG]-M-H-L-[IV]-[NY]-[DG]-[VK]-L-[QN]-G-[DK]-[TP]-I-P-[YN]-[EV]-L-[DP]-S stretch occupies residues 328-672 (FALAMHLIND…GKPIPNVLPS (345 aa)). T563 carries the post-translational modification Phosphothreonine. Residues 593 to 681 (EKSLFYKFLK…SSLIPSSTKL (89 aa)) enclose the EH 2 domain. An EF-hand 3 domain is found at 625 to 660 (LNRADLEQIWNLCDINNTGQLNKQEFALGMHLVYGK). Residues D638, N640, T642, Q644, and E649 each coordinate Ca(2+). The stretch at 650-672 (FALGMHLVYGKLNGKPIPNVLPS) is one 2-2 repeat. Disordered stretches follow at residues 729-758 (SAKNEEQSSFSSPSAKSVNHSSSTLQTDDI), 880-901 (ALTGKSTESEDSLSMEDEQQSA), 969-1127 (NSNK…EKRL), and 1149-1460 (LRKQ…PPLP). The segment covering 735–757 (QSSFSSPSAKSVNHSSSTLQTDD) has biased composition (polar residues). Residues S739 and S749 each carry the phosphoserine modification. Residues 888–899 (SEDSLSMEDEQQ) show a composition bias toward acidic residues. The span at 973 to 988 (SVTESSPFVPSSTPTP) shows a compositional bias: low complexity. Phosphothreonine occurs at positions 985 and 987. S995 bears the Phosphoserine mark. A compositionally biased stretch (basic and acidic residues) spans 1003-1030 (TAEERAAYLKEQAKKRMKEKLAKFDKNR). A compositionally biased stretch (polar residues) spans 1048-1058 (QPQQIAGSSNL). 5 repeat units span residues 1076–1081 (QPTQPV), 1082–1087 (QSTQPV), 1088–1093 (QPTQPV), 1094–1099 (QPTQPV), and 1100–1105 (QPTQPV). The segment at 1076-1105 (QPTQPVQSTQPVQPTQPVQPTQPVQPTQPV) is 5 X 6 AA tandem repeats of Q-[PS]-T-Q-P-V. Low complexity predominate over residues 1076–1106 (QPTQPVQSTQPVQPTQPVQPTQPVQPTQPVQ). A coiled-coil region spans residues 1111–1170 (AKQESDDEDEDDEEKRLQEELKRLKLKKKADKEKRLAALRKQIEDAQNESDEEETNGKDN). At S1160 the chain carries Phosphoserine. The span at 1175–1188 (VNVPQAAPVAPSAA) shows a compositional bias: low complexity. Over residues 1210-1221 (KNSTGLPSTTMG) the composition is skewed to polar residues. A compositionally biased stretch (low complexity) spans 1228–1239 (DASASSTSTFDA). Residues S1230 and S1233 each carry the phosphoserine modification. Positions 1240–1252 (RAAEMQRRIQRGL) are enriched in basic and acidic residues. Positions 1253–1265 (DEDEDDGWSDEDE) are enriched in acidic residues. S1261 carries the post-translational modification Phosphoserine. Residues 1272–1288 (VDNKVEEAKIGHPDHAR) are compositionally biased toward basic and acidic residues. The segment covering 1289–1298 (APPVTAAPLP) has biased composition (low complexity). 8 consecutive repeat copies span residues 1295–1300 (APLPSV), 1301–1306 (TPVPPA), 1307–1312 (VPVPQA), 1320–1325 (SPIPIA), 1326–1330 (PIPPS), 1335–1340 (PPVPLA), 1341–1346 (PPLPAV), and 1352–1357 (PPIPSA). The 8 X 6 AA repeats of [ATVSP]-P-[LVI]-P-[SPQILA]-[VAS] stretch occupies residues 1295-1357 (APLPSVTPVP…GFQEPPIPSA (63 aa)). Composition is skewed to pro residues over residues 1299–1308 (SVTPVPPAVP) and 1323–1344 (PIAPIPPSVTQEPPVPLAPPLP). Position 1301 is a phosphothreonine (T1301). Residues 1447-1460 (SIPPAGIPPPPPLP) are compositionally biased toward pro residues.

This sequence belongs to the PAN1 family. In terms of assembly, component of the PAN1 actin cytoskeleton-regulatory complex. In terms of processing, phosphorylated by PRK1 on threonine residues in the L-x-x-Q-x-T-G motif of repeats 1-6 to 1-15. Phosphorylated by ARK1.

Its subcellular location is the cell membrane. It localises to the endosome membrane. The protein localises to the cytoplasm. It is found in the cytoskeleton. The protein resides in the actin patch. In terms of biological role, component of the PAN1 actin cytoskeleton-regulatory complex required for the internalization of endosomes during actin-coupled endocytosis. The complex links the site of endocytosis to the cell membrane-associated actin cytoskeleton. Mediates uptake of external molecules and vacuolar degradation of plasma membrane proteins. Plays a role in the proper organization of the cell membrane-associated actin cytoskeleton and promotes its destabilization. This Saccharomyces cerevisiae (strain YJM789) (Baker's yeast) protein is Actin cytoskeleton-regulatory complex protein PAN1 (PAN1).